The chain runs to 332 residues: Ribosomal RNA small subunit methyltransferase C (332 aa).

Belongs to the methyltransferase superfamily. RsmC family. Monomer.

It is found in the cytoplasm. It catalyses the reaction guanosine(1207) in 16S rRNA + S-adenosyl-L-methionine = N(2)-methylguanosine(1207) in 16S rRNA + S-adenosyl-L-homocysteine + H(+). Specifically methylates the guanine in position 1207 of 16S rRNA in the 30S particle. The sequence is that of Ribosomal RNA small subunit methyltransferase C from Pseudomonas putida (strain ATCC 700007 / DSM 6899 / JCM 31910 / BCRC 17059 / LMG 24140 / F1).